Here is a 169-residue protein sequence, read N- to C-terminus: ATP synthase subunit b, sodium ion specific (169 aa).

A helical membrane pass occupies residues 5–27; it reads SFISLDWGVVFQIVNTIVMYLIL.

The protein belongs to the ATPase B chain family. F-type ATPases have 2 components, F(1) - the catalytic core - and F(0) - the membrane proton channel. F(1) has five subunits: alpha(3), beta(3), gamma(1), delta(1), epsilon(1). F(0) has three main subunits: a(1), b(2) and c(10-14). The alpha and beta chains form an alternating ring which encloses part of the gamma chain. F(1) is attached to F(0) by a central stalk formed by the gamma and epsilon chains, while a peripheral stalk is formed by the delta and b chains.

It localises to the cell membrane. In terms of biological role, f(1)F(0) ATP synthase produces ATP from ADP in the presence of a proton or sodium gradient. F-type ATPases consist of two structural domains, F(1) containing the extramembraneous catalytic core and F(0) containing the membrane proton channel, linked together by a central stalk and a peripheral stalk. During catalysis, ATP synthesis in the catalytic domain of F(1) is coupled via a rotary mechanism of the central stalk subunits to proton translocation. Component of the F(0) channel, it forms part of the peripheral stalk, linking F(1) to F(0). Its function is as follows. In this organism this enzyme may function as an ATP-driven Na(+) ion pump to generate a Na(+) ion electrochemical gradient rather than as an ATP synthase. The sequence is that of ATP synthase subunit b, sodium ion specific (atpF) from Clostridium paradoxum.